A 259-amino-acid polypeptide reads, in one-letter code: 3-deoxy-manno-octulosonate cytidylyltransferase (259 aa).

This sequence belongs to the KdsB family.

It localises to the cytoplasm. It catalyses the reaction 3-deoxy-alpha-D-manno-oct-2-ulosonate + CTP = CMP-3-deoxy-beta-D-manno-octulosonate + diphosphate. The protein operates within nucleotide-sugar biosynthesis; CMP-3-deoxy-D-manno-octulosonate biosynthesis; CMP-3-deoxy-D-manno-octulosonate from 3-deoxy-D-manno-octulosonate and CTP: step 1/1. Its pathway is bacterial outer membrane biogenesis; lipopolysaccharide biosynthesis. Functionally, activates KDO (a required 8-carbon sugar) for incorporation into bacterial lipopolysaccharide in Gram-negative bacteria. In Xanthomonas oryzae pv. oryzae (strain KACC10331 / KXO85), this protein is 3-deoxy-manno-octulosonate cytidylyltransferase.